The chain runs to 435 residues: Keratin, type I cytoskeletal 18 (435 aa).

A head region spans residues 2–84; the sequence is SYRPGSYSVS…SVSGSGLVGN (83 aa). Residues 85-120 are coil 1A; the sequence is EKETMIGLNDRLAAYLETVRNLEQANSKLEFQIREA. In terms of domain architecture, IF rod spans 85–396; it reads EKETMIGLND…RLLDGEDFRL (312 aa). The tract at residues 121–137 is linker 1; it reads LEKKGPTTRDLSPFEKT. The tract at residues 138 to 229 is coil 1B; sequence LEDLRKKVYD…QNHNQEVNDL (92 aa). The tract at residues 230 to 253 is linker 12; that stretch reads RNQIAQSGVQVDVDAPKGQDLAQV. The interval 254–391 is coil 2; it reads LAEVRAQYES…IATYRRLLDG (138 aa). The interval 392-435 is tail; sequence EDFRLQDALVDQSSTKSIKKVTVTQTLVDGKVVSESTNTKEIGK.

It belongs to the intermediate filament family. As to quaternary structure, heterotetramer of two type I and two type II keratins. Keratin-18 associates with keratin-8. Post-translationally, phosphorylated. Proteolytically cleaved by caspases during epithelial cell apoptosis.

When phosphorylated, plays a role in filament reorganization. The polypeptide is Keratin, type I cytoskeletal 18 (Acipenser baerii (Siberian sturgeon)).